Here is a 121-residue protein sequence, read N- to C-terminus: Protein 3.8 (121 aa).

This Escherichia phage T7 (Bacteriophage T7) protein is Protein 3.8.